A 255-amino-acid polypeptide reads, in one-letter code: Thrombin-like enzyme batroxobin (255 aa).

A signal peptide spans methionine 1–alanine 18. The propeptide occupies glutamine 19 to leucine 24. The Peptidase S1 domain maps to valine 25–alanine 247. Disulfide bonds link cysteine 31-cysteine 163, cysteine 50-cysteine 66, cysteine 98-cysteine 254, cysteine 142-cysteine 208, cysteine 174-cysteine 187, and cysteine 198-cysteine 223. Catalysis depends on charge relay system residues histidine 65 and aspartate 110. Asparagine 170 carries an N-linked (GlcNAc...) asparagine glycan. Residue serine 202 is the Charge relay system of the active site. A glycan (N-linked (GlcNAc...) asparagine) is linked at asparagine 249.

Belongs to the peptidase S1 family. Snake venom subfamily. In terms of assembly, monomer. In terms of tissue distribution, expressed by the venom gland.

The protein localises to the secreted. It catalyses the reaction Selective cleavage of Arg-|-Xaa bond in fibrinogen, to form fibrin, and release fibrinopeptide A. The specificity of further degradation of fibrinogen varies with species origin of the enzyme.. Its function is as follows. Thrombin-like snake venom serine protease. Cleaves Arg-Gly bonds in fibrinogen alpha chains (FGA). In Bothrops atrox (Barba amarilla), this protein is Thrombin-like enzyme batroxobin.